Consider the following 296-residue polypeptide: Ribosomal protein L11 methyltransferase (296 aa).

4 residues coordinate S-adenosyl-L-methionine: Thr-145, Gly-166, Asp-188, and Asn-230.

It belongs to the methyltransferase superfamily. PrmA family.

The protein resides in the cytoplasm. It carries out the reaction L-lysyl-[protein] + 3 S-adenosyl-L-methionine = N(6),N(6),N(6)-trimethyl-L-lysyl-[protein] + 3 S-adenosyl-L-homocysteine + 3 H(+). Its function is as follows. Methylates ribosomal protein L11. The protein is Ribosomal protein L11 methyltransferase of Histophilus somni (strain 129Pt) (Haemophilus somnus).